Here is a 484-residue protein sequence, read N- to C-terminus: LSAASWRTQSIYFLLTDRFGRTDNSTTATCNTGNEIYCGGSWQGIIDHLDYIEGMGFTAIWISPITEQLPQDTADGEAYHGYWQQKIYDVNSNFGTADNLKSLSDALHARGMYLMVDVVPDHMGYAGNGNDVDYSVFDPFDSSSYFHPYCLITDWDNLTMVEDCWEGDTIVSLPDLDTTETAVRTIWYDWVADLVSNYSVDGLRIDSVLEVQPDFFPGYNKASGVYCVGEIDNGNPASDCPYQKVLDGVLNYPIYWQLLYAFESSSGSISNLYNMIKSVASDCSDPTLLGNFIENHDNPRFAKYTSDYSQAKNVLSYIFLSDGIPIVYAGEEQHYAGGKVPYNREATWLSGYDTSAELYTWIATTNAIRKLAIAADSAYITYANDAFYTDSNTIAMAKGTSGSQVITVLSNKGSSGSSYTLTLSGSGYTSGTKLIEAYTCTSVTVDSSGDIPVPMASGLPRVLLPASVVDSSSLCGGSGRLYVE.

A glycan (N-linked (GlcNAc...) asparagine) is linked at asparagine 24. Cysteine 30 and cysteine 38 are disulfide-bonded. Tryptophan 83 is a substrate binding site. Ca(2+) is bound at residue aspartate 121. Histidine 122 is a substrate binding site. Cysteine 150 and cysteine 164 are joined by a disulfide. Residue asparagine 157 is glycosylated (N-linked (GlcNAc...) asparagine). Positions 162 and 175 each coordinate Ca(2+). An N-linked (GlcNAc...) asparagine glycan is attached at asparagine 197. A substrate-binding site is contributed by arginine 204. Ca(2+) is bound by residues aspartate 206, glutamate 210, and glutamate 230. Catalysis depends on aspartate 206, which acts as the Nucleophile. A substrate-binding site is contributed by 209-210 (LE). The active-site Proton donor is the glutamate 230. Residue glycine 234 coordinates substrate. Cysteine 240 and cysteine 283 are joined by a disulfide. Substrate-binding residues include aspartate 297 and arginine 344. Residues cysteine 440 and cysteine 475 are joined by a disulfide bond.

The protein belongs to the glycosyl hydrolase 13 family. In terms of assembly, monomer. It depends on Ca(2+) as a cofactor.

The protein localises to the secreted. The catalysed reaction is Endohydrolysis of (1-&gt;4)-alpha-D-glucosidic linkages in polysaccharides containing three or more (1-&gt;4)-alpha-linked D-glucose units.. The polypeptide is Acid alpha-amylase (Aspergillus niger).